A 303-amino-acid chain; its full sequence is uncharacterized protein (303 aa).

It localises to the cytoplasm. This is an uncharacterized protein from Saccharomyces cerevisiae (strain ATCC 204508 / S288c) (Baker's yeast).